The chain runs to 435 residues: Xylose isomerase (435 aa).

2 residues coordinate Mg(2+): Asp-306 and Asp-308.

This sequence belongs to the xylose isomerase family. Homotetramer. Mg(2+) serves as cofactor.

It localises to the cytoplasm. The enzyme catalyses alpha-D-xylose = alpha-D-xylulofuranose. This chain is Xylose isomerase, found in Allorhizobium ampelinum (strain ATCC BAA-846 / DSM 112012 / S4) (Agrobacterium vitis (strain S4)).